The chain runs to 132 residues: Small ribosomal subunit protein uS8 (132 aa).

It belongs to the universal ribosomal protein uS8 family. Part of the 30S ribosomal subunit. Contacts proteins S5 and S12.

Functionally, one of the primary rRNA binding proteins, it binds directly to 16S rRNA central domain where it helps coordinate assembly of the platform of the 30S subunit. The chain is Small ribosomal subunit protein uS8 from Borrelia duttonii (strain Ly).